A 436-amino-acid polypeptide reads, in one-letter code: Methyl-accepting chemotaxis protein Amb0994 (436 aa).

Residues 1 to 8 lie on the Cytoplasmic side of the membrane; that stretch reads METTLGSY. A helical transmembrane segment spans residues 9 to 29; that stretch reads ARTLSLGMLVPSAICLLAGTF. A topological domain (periplasmic) is located at residue Gly-30. A helical transmembrane segment spans residues 31–51; sequence LLGGSSIALWVVIAVSLLGVV. Residues 52–436 lie on the Cytoplasmic side of the membrane; sequence GGVKIGGSAR…DGFIARIGGR (385 aa). The Methyl-accepting transducer domain occupies 180–416; it reads AATELEASSG…QVADAASELS (237 aa). Gln-211 is subject to Glutamate methyl ester (Gln). At Glu-225 the chain carries Glutamate methyl ester (Glu). The interval 321-436 is required for interaction with MamK and to respond to the magnetic field; it reads TEDITSQVAH…DGFIARIGGR (116 aa).

Belongs to the methyl-accepting chemotaxis (MCP) protein family. Interacts with MamK at cell poles and septa.

The protein resides in the cell inner membrane. Its function is as follows. Probable methyl-accepting taxis protein. May be the receptor that senses the torque generated from the interaction between the magnetosome dipole moment and the external magnetic field. Overproduction interferes with magnetotaxis, cells respond more slowly to changes in the magnetic field; requires the MamK-interacting C-terminus of the protein. The effect of magnetic sensing is to control flagellar rotation. Chemotactic-signal transducers respond to changes in the concentration of attractants and repellents in the environment, transduce a signal from the outside to the inside of the cell, and facilitate sensory adaptation through variation of methylation levels. Attractants increase the level of methylation while repellents decrease the level of methylation. The sequence is that of Methyl-accepting chemotaxis protein Amb0994 from Paramagnetospirillum magneticum (strain ATCC 700264 / AMB-1) (Magnetospirillum magneticum).